Reading from the N-terminus, the 912-residue chain is MAAEKGGSSDEERKPLTRGSMEYRDSSNSLHYSSSAASLSLAVIDRINGSTHDTGPDEIGRGDRDYSDDGEYDLEEADYIPSGGKPVQKKVKIVLGFLLFLCLSGWSLAFVLFLFGGHESSKTSIVYEDNISDTGSQGIKITLDEVFDGTWSPNSRDISWIPGPNGEDGLLLEKGASISNGYLRVEDIVSRKDPKSSKKPIVLMQKAYFNVSGEAVFPSRVWPSPDLKTVLVLSNEEKNWRHSFTGKYWLFDVESQTGQPLDPAAKDQRVQLASWSPRSDAVVFTRDNNMFLRKLSSNEVIKITTNGGVNLFYGVPDWVYEEEVFSGNSVTWWADDGEYIAFLRTNESSVPEYPVQYFVSRPNGEIPKPGGESYPETRKIKYPKAGAPNPIVDLQFFDVGKDEVFSVDIKGDFADSNRLIIEVVWASNGKVIVRSTNRESDVLHVAVIDVLSRTGKIVRKEDINALDGGWVEPSQTTRFIPADPDNGRLNDGYIDTVIYEGRDQLAYYTPIDNPKPIVLTNGHSEVVQAPSGVDLKRGLVYFVVAGNEPWERHIYSVNFDGTSLQPVTNVSESSYYDVSFSNGAGYAFLKYAGPQVPWQKVISTPANEVTFEETIEENNHLSERLRQYTLESKIYQYIDIDGFSLPVLERRPPNFNQTKKYPVLFYLYGGPGSQTVKKKFNVDFQSYVAANLGYIVVTVDGRGTGFIGRKARCIIRGNLGHFESLDQIQAAKIWAAKPYVDESRISIWGWSYGGFMALKTIEQDGGRTFKYGIAVAPVTDWRYYDSIYTERYMHTPQRNPGGYDNAAISNTTALANNIRFLVMHGTADDNVHIQNSLTFIDKLDVNNVHNYDVHFFPDSDHSIYFHNAHKIVYSRLADWLVNAFNGEWLKTYDPTPNDSILRRAATWVGMSI.

Disordered regions lie at residues 1–30 (MAAE…SNSL) and 48–68 (NGST…DYSD). The Cytoplasmic segment spans residues 1 to 92 (MAAEKGGSSD…GGKPVQKKVK (92 aa)). 2 stretches are compositionally biased toward basic and acidic residues: residues 7-25 (GSSD…EYRD) and 54-67 (TGPD…RDYS). Residues 93–113 (IVLGFLLFLCLSGWSLAFVLF) traverse the membrane as a helical; Signal-anchor for type II membrane protein segment. The Vacuolar segment spans residues 114–912 (LFGGHESSKT…RAATWVGMSI (799 aa)). N-linked (GlcNAc...) asparagine glycans are attached at residues Asn130, Asn210, Asn346, Asn569, and Asn656. Ser751 (charge relay system) is an active-site residue. An N-linked (GlcNAc...) asparagine glycan is attached at Asn810. Residues Asp828 and His861 each act as charge relay system in the active site. Asn897 is a glycosylation site (N-linked (GlcNAc...) asparagine).

Belongs to the peptidase S9B family.

It is found in the vacuole membrane. The catalysed reaction is Release of an N-terminal dipeptide, Xaa-Yaa-|-Zaa-, from a polypeptide, preferentially when Yaa is Pro, provided Zaa is neither Pro nor hydroxyproline.. Type IV dipeptidyl-peptidase which removes N-terminal dipeptides sequentially from polypeptides having unsubstituted N-termini provided that the penultimate residue is proline. This chain is Probable dipeptidyl-aminopeptidase B (DAPB), found in Paracoccidioides brasiliensis (strain Pb18).